The chain runs to 541 residues: Membrane protein insertase YidC (541 aa).

The next 5 membrane-spanning stretches (helical) occupy residues 7–27 (LLFM…QVDY), 345–365 (LVQN…AILY), 415–435 (LGGC…YWTF), 453–473 (LSAQ…MFLL), and 492–512 (FMPL…VLYW).

Belongs to the OXA1/ALB3/YidC family. Type 1 subfamily. Interacts with the Sec translocase complex via SecD. Specifically interacts with transmembrane segments of nascent integral membrane proteins during membrane integration.

Its subcellular location is the cell inner membrane. Functionally, required for the insertion and/or proper folding and/or complex formation of integral membrane proteins into the membrane. Involved in integration of membrane proteins that insert both dependently and independently of the Sec translocase complex, as well as at least some lipoproteins. Aids folding of multispanning membrane proteins. The protein is Membrane protein insertase YidC of Histophilus somni (strain 129Pt) (Haemophilus somnus).